A 260-amino-acid polypeptide reads, in one-letter code: Phosphonates import ATP-binding protein PhnC 2 (260 aa).

The ABC transporter domain maps to 4 to 245; that stretch reads IQINKATKTY…KNTLRTIYQR (242 aa). 37–44 lines the ATP pocket; the sequence is GPSGAGKS.

It belongs to the ABC transporter superfamily. Phosphonates importer (TC 3.A.1.9.1) family. The complex is composed of two ATP-binding proteins (PhnC), two transmembrane proteins (PhnE) and a solute-binding protein (PhnD).

Its subcellular location is the cell inner membrane. The enzyme catalyses phosphonate(out) + ATP + H2O = phosphonate(in) + ADP + phosphate + H(+). In terms of biological role, part of the ABC transporter complex PhnCDE involved in phosphonates import. Responsible for energy coupling to the transport system. In Trichodesmium erythraeum (strain IMS101), this protein is Phosphonates import ATP-binding protein PhnC 2.